The primary structure comprises 2201 residues: Activating signal cointegrator 1 complex subunit 3 (2201 aa).

A Phosphoserine modification is found at Ser-12. Coiled-coil stretches lie at residues 18–81 (KQDN…KQIV) and 328–356 (IQSE…KAGE). The Helicase ATP-binding 1 domain maps to 486–669 (ETAYNTNENM…FLHVNPCIGL (184 aa)). 499 to 506 (APTGAGKT) contributes to the ATP binding site. Lys-572 carries the post-translational modification N6-acetyllysine. The short motif at 611–614 (DEVH) is the DEVH box element. One can recognise a Helicase C-terminal 1 domain in the interval 696-914 (QLNNMDEVCY…GTVTNVEEAV (219 aa)). In terms of domain architecture, SEC63 1 spans 978-1287 (STDLGRTASH…GAEAVCIINF (310 aa)). The region spanning 1336–1511 (HTLYHTDCNV…WLNIRQMGLF (176 aa)) is the Helicase ATP-binding 2 domain. 1349–1356 (APTGSGKT) provides a ligand contact to ATP. Positions 1453 to 1456 (DEIH) match the DEIH box motif. The region spanning 1544-1739 (PTFQAIRSHS…VLSDHLNAEI (196 aa)) is the Helicase C-terminal 2 domain. In terms of domain architecture, SEC63 2 spans 1812 to 2176 (PLTYGRIASY…LGLDQQYDIH (365 aa)).

This sequence belongs to the helicase family. In terms of assembly, identified in the ASCC complex that contains ASCC1, ASCC2 and ASCC3. Functions as a scaffolding subunit that interacts directly with both ASCC1 and ASCC2. Interacts directly with ALKBH3, and thereby recruits ALKBH3 to the ASCC complex. Part of the ASC-1/TRIP4 complex, that contains TRIP4, ASCC1, ASCC2 and ASCC3. Part of the RQT (ribosome quality control trigger) complex, that contains ASCC2, ASCC3 and TRIP4. Associates with ribosomes; recruited to collided ribosomes. Interacts with ZCCHC4. Interacts with ZNF598. Interacts with RPS3.

Its subcellular location is the nucleus. It localises to the nucleus speckle. It is found in the cytoplasm. The protein resides in the cytosol. It catalyses the reaction Couples ATP hydrolysis with the unwinding of duplex DNA by translocating in the 3'-5' direction.. It carries out the reaction ATP + H2O = ADP + phosphate + H(+). Its function is as follows. ATPase involved both in DNA repair and rescue of stalled ribosomes. 3'-5' DNA helicase involved in repair of alkylated DNA: promotes DNA unwinding to generate single-stranded substrate needed for ALKBH3, enabling ALKBH3 to process alkylated N3-methylcytosine (3mC) within double-stranded regions. Also involved in activation of the ribosome quality control (RQC) pathway, a pathway that degrades nascent peptide chains during problematic translation. Drives the splitting of stalled ribosomes that are ubiquitinated in a ZNF598-dependent manner, as part of the ribosome quality control trigger (RQT) complex. Part of the ASC-1 complex that enhances NF-kappa-B, SRF and AP1 transactivation. This Bos taurus (Bovine) protein is Activating signal cointegrator 1 complex subunit 3 (ascc3).